The chain runs to 198 residues: 7-methyl-GTP pyrophosphatase (198 aa).

D75 functions as the Proton acceptor in the catalytic mechanism.

The protein belongs to the Maf family. YceF subfamily. A divalent metal cation serves as cofactor.

Its subcellular location is the cytoplasm. The enzyme catalyses N(7)-methyl-GTP + H2O = N(7)-methyl-GMP + diphosphate + H(+). In terms of biological role, nucleoside triphosphate pyrophosphatase that hydrolyzes 7-methyl-GTP (m(7)GTP). May have a dual role in cell division arrest and in preventing the incorporation of modified nucleotides into cellular nucleic acids. The chain is 7-methyl-GTP pyrophosphatase from Nitrosospira multiformis (strain ATCC 25196 / NCIMB 11849 / C 71).